A 61-amino-acid chain; its full sequence is Large ribosomal subunit protein uL30 (61 aa).

This sequence belongs to the universal ribosomal protein uL30 family. In terms of assembly, part of the 50S ribosomal subunit.

In Chromobacterium violaceum (strain ATCC 12472 / DSM 30191 / JCM 1249 / CCUG 213 / NBRC 12614 / NCIMB 9131 / NCTC 9757 / MK), this protein is Large ribosomal subunit protein uL30.